Reading from the N-terminus, the 111-residue chain is Ribulose bisphosphate carboxylase small subunit (111 aa).

The protein belongs to the RuBisCO small chain family. In terms of assembly, heterohexadecamer of 8 large and 8 small subunits. The CcmM short form purifies from carboxysomes in complex with both RuBisCO subunits; a second complex with full-length CcmM and RuBisCO also includes carbonic anhydrase (CA, ccaA). RuBisCO-CcmM complexes are probably associated with the carboxysome shell. Isolated reduced and oxidized SSUL1 binds holo-RuBisCO (RbcL(8)-RbcS(8)) but not either subunit octamer alone; RuBisCO has a higher affinity for reduced SSUL1.

Its subcellular location is the carboxysome. RuBisCO catalyzes two reactions: the carboxylation of D-ribulose 1,5-bisphosphate, the primary event in carbon dioxide fixation, as well as the oxidative fragmentation of the pentose substrate in the photorespiration process. Both reactions occur simultaneously and in competition at the same active site. Its function is as follows. Beta-carboxysome assembly initiates when soluble RuBisCO aggregates is condensed into a liquid matrix in a pre-carboxysome by the RbcS-like domains of probably both CcmM58 and CcmM35. CcmN interacts with the N-terminus of CcmM58, and then recruits the CcmK2 major shell protein via CcmN's encapsulation peptide. Shell formation requires CcmK proteins and CcmO. CcmL caps the otherwise elongated carboxysome. Once fully encapsulated carboxysomes are formed, they migrate within the cell probably via interactions with the cytoskeleton. The polypeptide is Ribulose bisphosphate carboxylase small subunit (Synechococcus elongatus (strain ATCC 33912 / PCC 7942 / FACHB-805) (Anacystis nidulans R2)).